Consider the following 229-residue polypeptide: MESSLKIKDIPQNERPKEKLLTYGAESLSNSELLAIIIRTGTQGENVLQLCSRLLSELEGLNGILDASFDDIISIKGIKQGKASQILALAELFKRFRTLKAINNDIKITSPKDLASLLMGEMNELNQEVLKVVLLNTKNIVVGIKDVFKGSLNTSVVHPREIFKQAISKNSASIIICHNHPSGDPTPSREDINITLRIKECGNIIGIQLVDHIIIGNNKFVSLKERGLI.

One can recognise an MPN domain in the interval 107–229; that stretch reads KITSPKDLAS…FVSLKERGLI (123 aa). His-178, His-180, and Asp-191 together coordinate Zn(2+). Residues 178–191 carry the JAMM motif motif; it reads HNHPSGDPTPSRED.

It belongs to the UPF0758 family.

This is UPF0758 protein Cbei_0490 from Clostridium beijerinckii (strain ATCC 51743 / NCIMB 8052) (Clostridium acetobutylicum).